The following is a 628-amino-acid chain: Chaperone protein HtpG (628 aa).

Residues 1-337 (MSEKKYTFET…SADLPLNVSR (337 aa)) form an a; substrate-binding region. Residues 338–554 (EILQHNKVID…DYGMSLHMQK (217 aa)) form a b region. Residues 555–628 (MMEEAGQSFM…FVKLVNKYIR (74 aa)) form a c region.

The protein belongs to the heat shock protein 90 family. As to quaternary structure, homodimer.

The protein localises to the cytoplasm. Functionally, molecular chaperone. Has ATPase activity. The protein is Chaperone protein HtpG of Francisella tularensis subsp. holarctica (strain FTNF002-00 / FTA).